The sequence spans 164 residues: Thiol peroxidase (164 aa).

The region spanning 18–163 (VSEGQHAPDF…FDAALEAYRN (146 aa)) is the Thioredoxin domain. Cys-60 (cysteine sulfenic acid (-SOH) intermediate) is an active-site residue. A disulfide bond links Cys-60 and Cys-93.

Belongs to the peroxiredoxin family. Tpx subfamily. In terms of assembly, homodimer.

The enzyme catalyses a hydroperoxide + [thioredoxin]-dithiol = an alcohol + [thioredoxin]-disulfide + H2O. In terms of biological role, thiol-specific peroxidase that catalyzes the reduction of hydrogen peroxide and organic hydroperoxides to water and alcohols, respectively. Plays a role in cell protection against oxidative stress by detoxifying peroxides. The sequence is that of Thiol peroxidase from Staphylococcus haemolyticus (strain JCSC1435).